The primary structure comprises 186 residues: MASPSKAVIVPGNGGGDVTTHGWYGWVKKELEKIPGFQCLAKNMPDPITARESIWLPFMETELHCDEKTIIIGHSSGAIAAMRYAETHRVYAIVLVSAYTSDLGDENERASGYFTRPWQWEKIKANCPYIVQFGSTDDPFLPWKEQQEVADRLETKLHKFTDCGHFQNTEFHELITVVKSLLKVPA.

The tract at residues 63–67 is involved in binding to RB1; the sequence is LHCDE. Active-site charge relay system residues include Ser-75, Asp-138, and His-165.

It belongs to the RBBP9 family. Interacts with RB1; the interaction disrupts RB1 binding to E2F1. Interacts with RBL1 and RBL2. As to expression, expressed at higher levels in tumor tissues such as carcinoma.

The catalysed reaction is valacyclovir + H2O = acyclovir + L-valine + H(+). With respect to regulation, inhibited by the natural product emetine produced by the ipecac root. Serine hydrolase. Catalyzes the hydrolytic activation of amino acid ester of the antiviral prodrug valacyclovir to its corresponding active drug, acyclovir. May negatively regulate basal or autocrine TGF-beta signaling by suppressing SMAD2-SMAD3 phosphorylation. May play a role in the transformation process due to its capacity to confer resistance to the growth-inhibitory effects of TGF-beta through interaction with RB1 and the subsequent displacement of E2F1. This Homo sapiens (Human) protein is Serine hydrolase RBBP9.